The primary structure comprises 298 residues: MGSYTEPRVAIVAGATSLTRDPLQSGIGIDLAKDLCSKGWKVACVGRRQEAGEALLKDLPQDRAYFFAADVSNYEQYASVFSKVHHLWGRIDALCANAGIVDTSSLYIYGSKNNGVDNIPPAPDLSVVDINYKGVVYGTQLAIHFMRHNPQPGGRIVVTGSIGAVFPHKTYPVYCGTKAAVNHFIRGVAPLLKQKENISINCVMPGIVNTPIVPPEMIAAVTPECITPVQTVLRGYETFLEDSTGMAGEILECSADKLIYYHMPKPGNGHITKRAVTVWEPLFRMSHGEVSGLPDAIP.

The NADP(+) site is built by I27, D70, N97, Y174, K178, V208, and T210. The Proton acceptor role is filled by Y174. Catalysis depends on K178, which acts as the Lowers pKa of active site Tyr.

Belongs to the short-chain dehydrogenases/reductases (SDR) family.

It participates in sesquiterpene biosynthesis. Short-chain dehydrogenase/reductase; part of the gene cluster that mediates the biosynthesis of PR-toxin, a bicyclic sesquiterpene belonging to the eremophilane class and acting as a mycotoxin. The first step of the pathway is catalyzed by the aristolochene synthase which performs the cyclization of trans,trans-farnesyl diphosphate (FPP) to the bicyclic sesquiterpene aristolochene. Following the formation of aristolochene, the non-oxygenated aristolochene is converted to the trioxygenated intermediate eremofortin B, via 7-epi-neopetasone. This conversion appears to involve three enzymes, a hydroxysterol oxidase-like enzyme, the quinone-oxidase prx3 that forms the quinone-type-structure in the bicyclic nucleus of aristolochene with the C8-oxo group and the C-3 hydroxyl group, and the P450 monooxygenase prx9 that introduces the epoxide at the double bond between carbons 1 and 2. No monoxy or dioxy-intermediates have been reported to be released to the broth, so these three early oxidative reactions may be coupled together. Eremofortin B is further oxidized by another P450 monooxygenase, that introduces a second epoxide between carbons 7 and 11 prior to acetylation to eremofortin A by the acetyltransferase prx11. The second epoxidation may be performed by a second P450 monooxygenase. After the acetylation step, eremofortin A is converted to eremofortin C and then to PR-toxin. First the conversion of eremofortin A to eremofortin C proceeds by oxidation of the side chain of the molecule at C-12 and is catalyzed by the short-chain oxidoreductase prx1. The cytochrome P450 monooxygenase prx8 also plays a role in this step. The primary alcohol formed at C-12 is finally oxidized by the short-chain alcohol dehydrogenase prx4 that forms PR-toxin. The sequence is that of Short-chain dehydrogenase/reductase prx6 from Penicillium rubens (strain ATCC 28089 / DSM 1075 / NRRL 1951 / Wisconsin 54-1255) (Penicillium chrysogenum).